The chain runs to 531 residues: Putative UDP-glucuronosyltransferase ugt-46 (531 aa).

The N-terminal stretch at 1–17 (MRLIFVLLATFVNAAFS) is a signal peptide. A glycan (N-linked (GlcNAc...) asparagine) is linked at asparagine 304. A helical transmembrane segment spans residues 493–513 (VIIPVFWLSISLVIPTIFGWY).

Belongs to the UDP-glycosyltransferase family.

The protein localises to the membrane. The catalysed reaction is glucuronate acceptor + UDP-alpha-D-glucuronate = acceptor beta-D-glucuronoside + UDP + H(+). The chain is Putative UDP-glucuronosyltransferase ugt-46 (ugt-46) from Caenorhabditis elegans.